We begin with the raw amino-acid sequence, 614 residues long: Vitamin B12 transporter BtuB (614 aa).

Positions 1–20 (MIKKASLLTACSVTAFSAWA) are cleaved as a signal peptide. The TonB box signature appears at 26-33 (DTLVVTAN). Residues 38–152 (PRSTVLAPTT…IGGVVNIITT (115 aa)) form the TBDR plug domain. Residues Leu83, Ser85, Asn92, and 110–111 (GS) each bind cyanocob(III)alamin. The TBDR beta-barrel domain maps to 155–614 (EPGTEISAGW…EYTLSGSYTF (460 aa)). Transmembrane regions (beta stranded) follow at residues 158-165 (TEISAGWG), 169-178 (YQNYDVSTQQ), and 184-195 (TRVTLLGDYAHT). 4 residues coordinate Ca(2+): Asp199, Gln211, Asp213, and Asp215. 2 beta stranded membrane passes run 217–227 (FLSKTLYGALE) and 232–248 (DAWS…NRTN). Residues Tyr249 and Asp250 each coordinate Ca(2+). Ala251 contributes to the cyanocob(III)alamin binding site. Asp261 serves as a coordination point for Ca(2+). The next 14 beta stranded transmembrane spans lie at 263–277 (RKLY…LRYN), 279–296 (ELIK…KDYN), 309–325 (TLDE…NNII), 328–337 (HGNVGAGVDW), 353–369 (YDQR…QQVG), 371–381 (FTFEGAARSDD), 385–400 (FGRH…WEFI), 403–417 (YRFI…KAPN), 434–443 (KSKQWEGAFE), 449–458 (VNWRISGYRN), 473–490 (YYNE…TANF), 494–509 (PLTH…ARNA), 517–529 (RRAK…QLDW), and 535–550 (DWGI…YDKD). A cyanocob(III)alamin-binding site is contributed by Thr309. A cyanocob(III)alamin-binding site is contributed by Arg517. Tyr551 is a cyanocob(III)alamin binding site. Transmembrane regions (beta stranded) follow at residues 558–572 (TVKM…LAVA), 585–596 (IANLFDKDYETV), and 602–614 (AGRE…SYTF). The short motif at 597 to 614 (YGYQTAGREYTLSGSYTF) is the TonB C-terminal box element.

It belongs to the TonB-dependent receptor family. BtuB (TC 1.B.14.3.1) subfamily.

It localises to the cell outer membrane. Its function is as follows. Involved in the active translocation of vitamin B12 (cyanocobalamin) across the outer membrane to the periplasmic space. It derives its energy for transport by interacting with the trans-periplasmic membrane protein TonB. In Escherichia coli O157:H7, this protein is Vitamin B12 transporter BtuB.